A 290-amino-acid polypeptide reads, in one-letter code: PIH1 domain-containing protein 1 (290 aa).

Residues serine 12, serine 16, and serine 173 each carry the phosphoserine modification.

Belongs to the PIH1 family. As to quaternary structure, component of the R2TP complex composed at least of RUVBL1, RUVBL2, RPAP3 and PIHD1. Component of the PAQosome complex which is responsible for the biogenesis of several protein complexes and which consists of R2TP complex members RUVBL1, RUVBL2, RPAP3 and PIH1D1, URI complex members PFDN2, PFDN6, PDRG1, UXT and URI1 as well as ASDURF, POLR2E and DNAAF10/WDR92. Interacts with phosphorylated TELO2 and mediates interaction of TELO2 with the R2TP complex. Interacts with phosphorylated ECD, EFTUD2/SNRP116, RPB1 and UBR5 and with RPB1 in a phosphorylation-independent manner. Interacts with the core C/D box snoRNP particle components NOP58 and FBL and with RUVBL1/TIP49. Interacts with RPAP3 and DNAAF10. Interacts with histone H4 and with SWI/SNF complex member SMARCB1/SNF5. Interacts with the mTORC1 complex member RPTOR. Interacts with MSL1.

The protein localises to the nucleus. Functionally, involved in the assembly of C/D box small nucleolar ribonucleoprotein (snoRNP) particles. Recruits the SWI/SNF complex to the core promoter of rRNA genes and enhances pre-rRNA transcription. Mediates interaction of TELO2 with the R2TP complex which is necessary for the stability of MTOR and SMG1. Positively regulates the assembly and activity of the mTORC1 complex. The protein is PIH1 domain-containing protein 1 (Pih1d1) of Rattus norvegicus (Rat).